Reading from the N-terminus, the 1391-residue chain is DNA-directed RNA polymerase subunit beta' (1391 aa).

Positions 72, 74, 87, and 90 each coordinate Zn(2+). Asp-462, Asp-464, and Asp-466 together coordinate Mg(2+). Residues Cys-816, Cys-890, Cys-897, and Cys-900 each contribute to the Zn(2+) site.

This sequence belongs to the RNA polymerase beta' chain family. The RNAP catalytic core consists of 2 alpha, 1 beta, 1 beta' and 1 omega subunit. When a sigma factor is associated with the core the holoenzyme is formed, which can initiate transcription. Mg(2+) is required as a cofactor. Zn(2+) serves as cofactor.

It carries out the reaction RNA(n) + a ribonucleoside 5'-triphosphate = RNA(n+1) + diphosphate. Functionally, DNA-dependent RNA polymerase catalyzes the transcription of DNA into RNA using the four ribonucleoside triphosphates as substrates. The protein is DNA-directed RNA polymerase subunit beta' of Neisseria gonorrhoeae (strain NCCP11945).